The primary structure comprises 260 residues: HTH-type transcriptional repressor NanR (260 aa).

A disordered region spans residues 1-21; it reads MSAFDHSSDDTQETIGNSLRR. The region spanning 27–95 is the HTH gntR-type domain; it reads KKLSEMVEEE…NGERARVSRP (69 aa). Residues 55–74 constitute a DNA-binding region (H-T-H motif); that stretch reads ERELMAFFNVGRPSVREALA.

It belongs to the NanR family.

Transcriptional repressor that controls expression of the genes required for the catabolism of sialic acids. This chain is HTH-type transcriptional repressor NanR, found in Klebsiella aerogenes (strain ATCC 13048 / DSM 30053 / CCUG 1429 / JCM 1235 / KCTC 2190 / NBRC 13534 / NCIMB 10102 / NCTC 10006 / CDC 819-56) (Enterobacter aerogenes).